An 847-amino-acid polypeptide reads, in one-letter code: Putative disease resistance RPP13-like protein 2 (847 aa).

Residues 26 to 42 adopt a coiled-coil conformation; sequence GVKDDLEELKTELTCIQ. The NB-ARC domain occupies 142 to 446; it reads STSRVREVRR…AEGFIQEDEE (305 aa). Position 191 to 198 (191 to 198) interacts with ATP; that stretch reads GMEGLGKT. LRR repeat units lie at residues 587–610, 612–634, 703–726, 749–774, and 807–830; these read LVHL…ISNL, FLQT…NLTS, LKNL…TVRF, FPSL…KLQR, and IKRL…NLDN.

This sequence belongs to the disease resistance NB-LRR family. RPP13 subfamily.

Potential disease resistance protein. The protein is Putative disease resistance RPP13-like protein 2 (RPP13L2) of Arabidopsis thaliana (Mouse-ear cress).